Reading from the N-terminus, the 309-residue chain is Porphobilinogen deaminase (309 aa).

An S-(dipyrrolylmethanemethyl)cysteine modification is found at Cys-241.

It belongs to the HMBS family. Monomer. The cofactor is dipyrromethane.

It carries out the reaction 4 porphobilinogen + H2O = hydroxymethylbilane + 4 NH4(+). It participates in porphyrin-containing compound metabolism; protoporphyrin-IX biosynthesis; coproporphyrinogen-III from 5-aminolevulinate: step 2/4. Its function is as follows. Tetrapolymerization of the monopyrrole PBG into the hydroxymethylbilane pre-uroporphyrinogen in several discrete steps. The chain is Porphobilinogen deaminase from Bacillus mycoides (strain KBAB4) (Bacillus weihenstephanensis).